Consider the following 315-residue polypeptide: Ribonuclease Z (315 aa).

Zn(2+) is bound by residues His61, His63, Asp65, His66, His151, Asp219, and His278. Asp65 serves as the catalytic Proton acceptor.

It belongs to the RNase Z family. As to quaternary structure, homodimer. Zn(2+) serves as cofactor.

It carries out the reaction Endonucleolytic cleavage of RNA, removing extra 3' nucleotides from tRNA precursor, generating 3' termini of tRNAs. A 3'-hydroxy group is left at the tRNA terminus and a 5'-phosphoryl group is left at the trailer molecule.. In terms of biological role, zinc phosphodiesterase, which displays some tRNA 3'-processing endonuclease activity. Probably involved in tRNA maturation, by removing a 3'-trailer from precursor tRNA. The chain is Ribonuclease Z from Clostridium botulinum (strain Alaska E43 / Type E3).